The chain runs to 239 residues: Probable transcriptional regulatory protein BC_0539 (239 aa).

The protein belongs to the TACO1 family. YeeN subfamily.

Its subcellular location is the cytoplasm. The polypeptide is Probable transcriptional regulatory protein BC_0539 (Bacillus cereus (strain ATCC 14579 / DSM 31 / CCUG 7414 / JCM 2152 / NBRC 15305 / NCIMB 9373 / NCTC 2599 / NRRL B-3711)).